A 367-amino-acid chain; its full sequence is 2-aminoethylphosphonate--pyruvate transaminase (367 aa).

K193 bears the N6-(pyridoxal phosphate)lysine mark.

It belongs to the class-V pyridoxal-phosphate-dependent aminotransferase family. PhnW subfamily. Homodimer. The cofactor is pyridoxal 5'-phosphate.

The catalysed reaction is (2-aminoethyl)phosphonate + pyruvate = phosphonoacetaldehyde + L-alanine. Involved in phosphonate degradation. The chain is 2-aminoethylphosphonate--pyruvate transaminase from Vibrio parahaemolyticus serotype O3:K6 (strain RIMD 2210633).